The chain runs to 503 residues: ESX-5 secretion system protein EccD5 (503 aa).

The next 11 membrane-spanning stretches (helical) occupy residues 137 to 157 (IVAV…ATGV), 169 to 189 (LTTI…MLLL), 200 to 220 (VADI…AAAP), 224 to 244 (VGSP…ALAL), 250 to 270 (RLGI…AALA), 272 to 292 (MVAA…CVVA), 359 to 379 (FLSG…TSLC), 382 to 402 (HTGQ…FLLL), 413 to 433 (SITL…RYAL), 439 to 459 (LAVS…MAAA), and 480 to 500 (YLCL…YAAI).

It belongs to the EccD/Snm4 family. As to quaternary structure, part of the ESX-5 / type VII secretion system (T7SS), which is composed of cytosolic and membrane components. The ESX-5 membrane complex is composed of EccB5, EccC5, EccD5 and EccE5.

Its subcellular location is the cell inner membrane. Functionally, part of the ESX-5 specialized secretion system, which is responsible for the secretion of EsxN and a number of PE_PGRS and PPE proteins, including PPE41. In Mycobacterium tuberculosis (strain CDC 1551 / Oshkosh), this protein is ESX-5 secretion system protein EccD5.